Reading from the N-terminus, the 50-residue chain is Mating-type pheromone BAP1(3) (50 aa).

Cysteine 47 is subject to Cysteine methyl ester. Residue cysteine 47 is the site of S-farnesyl cysteine attachment. A propeptide spans 48–50 (VVA) (removed in mature form).

The protein localises to the cell membrane. In terms of biological role, activates B-regulated development. This chain is Mating-type pheromone BAP1(3) (BAP1(3)), found in Schizophyllum commune (Split gill fungus).